Here is a 363-residue protein sequence, read N- to C-terminus: sn-glycerol-3-phosphate import ATP-binding protein UgpC (363 aa).

The 232-residue stretch at 4–235 folds into the ABC transporter domain; it reads VVLRNVRKTY…PATTFVASFI (232 aa). 37–44 lines the ATP pocket; it reads GPSGCGKS.

Belongs to the ABC transporter superfamily. sn-glycerol-3-phosphate importer (TC 3.A.1.1.3) family. As to quaternary structure, the complex is composed of two ATP-binding proteins (UgpC), two transmembrane proteins (UgpA and UgpE) and a solute-binding protein (UgpB).

The protein localises to the cell inner membrane. It carries out the reaction sn-glycerol 3-phosphate(out) + ATP + H2O = sn-glycerol 3-phosphate(in) + ADP + phosphate + H(+). Part of the ABC transporter complex UgpBAEC involved in sn-glycerol-3-phosphate (G3P) import. Responsible for energy coupling to the transport system. This chain is sn-glycerol-3-phosphate import ATP-binding protein UgpC, found in Rhodopseudomonas palustris (strain ATCC BAA-98 / CGA009).